Here is a 302-residue protein sequence, read N- to C-terminus: Protoheme IX farnesyltransferase 1 (302 aa).

The next 9 helical transmembrane spans lie at V30 to V50, L52 to F72, A102 to N122, L124 to L144, I152 to G172, A178 to I198, C224 to M244, C245 to W265, and F282 to V302.

This sequence belongs to the UbiA prenyltransferase family. Protoheme IX farnesyltransferase subfamily.

The protein resides in the cell inner membrane. The enzyme catalyses heme b + (2E,6E)-farnesyl diphosphate + H2O = Fe(II)-heme o + diphosphate. It functions in the pathway porphyrin-containing compound metabolism; heme O biosynthesis; heme O from protoheme: step 1/1. In terms of biological role, converts heme B (protoheme IX) to heme O by substitution of the vinyl group on carbon 2 of heme B porphyrin ring with a hydroxyethyl farnesyl side group. In Shewanella woodyi (strain ATCC 51908 / MS32), this protein is Protoheme IX farnesyltransferase 1.